The sequence spans 495 residues: ATP synthase subunit beta, chloroplastic (495 aa).

Residue 172–179 (GGAGVGKT) coordinates ATP.

It belongs to the ATPase alpha/beta chains family. F-type ATPases have 2 components, CF(1) - the catalytic core - and CF(0) - the membrane proton channel. CF(1) has five subunits: alpha(3), beta(3), gamma(1), delta(1), epsilon(1). CF(0) has four main subunits: a(1), b(1), b'(1) and c(9-12).

The protein resides in the plastid. The protein localises to the chloroplast thylakoid membrane. It carries out the reaction ATP + H2O + 4 H(+)(in) = ADP + phosphate + 5 H(+)(out). Functionally, produces ATP from ADP in the presence of a proton gradient across the membrane. The catalytic sites are hosted primarily by the beta subunits. This is ATP synthase subunit beta, chloroplastic from Hyacinthus orientalis (Common hyacinth).